The primary structure comprises 514 residues: tRNA-2-methylthio-N(6)-dimethylallyladenosine synthase (514 aa).

The MTTase N-terminal domain occupies 68-186; sequence RTFLIKTYGC…LPEILEEAYL (119 aa). Residues cysteine 77, cysteine 113, cysteine 147, cysteine 223, cysteine 227, and cysteine 230 each contribute to the [4Fe-4S] cluster site. The region spanning 209–439 is the Radical SAM core domain; that stretch reads RDGHIKAWVN…NKKVGIYSQQ (231 aa). The TRAM domain occupies 442-505; the sequence is SQYEGKIVTV…QYSLNGTFIQ (64 aa).

This sequence belongs to the methylthiotransferase family. MiaB subfamily. Monomer. The cofactor is [4Fe-4S] cluster.

It is found in the cytoplasm. The catalysed reaction is N(6)-dimethylallyladenosine(37) in tRNA + (sulfur carrier)-SH + AH2 + 2 S-adenosyl-L-methionine = 2-methylsulfanyl-N(6)-dimethylallyladenosine(37) in tRNA + (sulfur carrier)-H + 5'-deoxyadenosine + L-methionine + A + S-adenosyl-L-homocysteine + 2 H(+). In terms of biological role, catalyzes the methylthiolation of N6-(dimethylallyl)adenosine (i(6)A), leading to the formation of 2-methylthio-N6-(dimethylallyl)adenosine (ms(2)i(6)A) at position 37 in tRNAs that read codons beginning with uridine. The chain is tRNA-2-methylthio-N(6)-dimethylallyladenosine synthase from Staphylococcus epidermidis (strain ATCC 35984 / DSM 28319 / BCRC 17069 / CCUG 31568 / BM 3577 / RP62A).